Consider the following 859-residue polypeptide: DNA mismatch repair protein MutS (859 aa).

Residue 617–624 (GPNMGGKS) coordinates ATP. The tract at residues 799–821 (ETTSLPHEQPRAKPGKPAVPQQS) is disordered.

This sequence belongs to the DNA mismatch repair MutS family.

Its function is as follows. This protein is involved in the repair of mismatches in DNA. It is possible that it carries out the mismatch recognition step. This protein has a weak ATPase activity. The chain is DNA mismatch repair protein MutS from Pseudomonas savastanoi pv. phaseolicola (strain 1448A / Race 6) (Pseudomonas syringae pv. phaseolicola (strain 1448A / Race 6)).